A 386-amino-acid chain; its full sequence is DNA-directed RNA polymerase subunit Rpo1C (386 aa).

The protein belongs to the RNA polymerase beta' chain family. In terms of assembly, part of the RNA polymerase complex.

The protein resides in the cytoplasm. It catalyses the reaction RNA(n) + a ribonucleoside 5'-triphosphate = RNA(n+1) + diphosphate. DNA-dependent RNA polymerase (RNAP) catalyzes the transcription of DNA into RNA using the four ribonucleoside triphosphates as substrates. Forms part of the jaw domain. The chain is DNA-directed RNA polymerase subunit Rpo1C from Methanococcus maripaludis (strain C7 / ATCC BAA-1331).